We begin with the raw amino-acid sequence, 97 residues long: Putative defensin-like protein 237 (97 aa).

Residues 1–23 form the signal peptide; sequence MRHATSPIVFCFLIFLVMNHVKG. 4 disulfide bridges follow: Cys30–Cys94, Cys40–Cys71, Cys48–Cys84, and Cys69–Cys86.

The protein belongs to the DEFL family.

The protein localises to the secreted. In Arabidopsis thaliana (Mouse-ear cress), this protein is Putative defensin-like protein 237 (SCRL21).